The following is an 82-amino-acid chain: MAEPTMDSLLARINELAHKNKTDGLTDEETAERDHLRKQYLKLFRESFRSQVEMMQVYDKAGKEVTPEKVRQIQRDKGLRDD.

Belongs to the UPF0291 family.

Its subcellular location is the cytoplasm. This chain is UPF0291 protein LVIS_1359, found in Levilactobacillus brevis (strain ATCC 367 / BCRC 12310 / CIP 105137 / JCM 1170 / LMG 11437 / NCIMB 947 / NCTC 947) (Lactobacillus brevis).